The sequence spans 3677 residues: Dystrophin (3677 aa).

The tract at residues 1 to 240 (MLWWEEVEDC…YITSLFQVLP (240 aa)) is actin-binding. 2 Calponin-homology (CH) domains span residues 15–119 (DVQK…LHWQ) and 134–240 (TNSE…QVLP). Residues 63-72 (PKEKGSTRVH) form an ANK2- and ANK-3 binding region. Spectrin repeat units lie at residues 342–447 (LDSY…SNLH), 451–557 (MDLQ…LLQD), 560–668 (LKWQ…QISQ), 728–828 (DITE…NWLE), 831–935 (NNII…ELQT), 944–1046 (RYQE…KLEE), 1049–1154 (NKLR…EALK), 1163–1264 (LQKD…TLEE), 1268–1464 (CWHE…LFQK), 1469–1569 (EQRL…QLEK), 1573–1676 (LSRK…NLLL), 1680–1777 (KHME…TGKA), 1779–1875 (IPLK…KALE), 1878–1980 (HQWY…TLHE), 2001–2098 (YLTE…ERQG), 2106–2209 (KWRH…RVEE), 2215–2316 (SEFQ…GELE), 2317–2415 (VHIK…LRTK), 2465–2569 (ADFN…QLNE), 2576–2678 (QWLE…ALEE), 2682–2786 (LLQQ…KKSL), 2800–2922 (KRLH…RKID), and 2927–3032 (RLQE…QLHE). The interaction with SYNM stretch occupies residues 1416 to 1914 (SDLTSHEISL…PEPRDERKIK (499 aa)). The 34-residue stretch at 3047-3080 (TSVQGPWERAISPNKVPYYINHETQTTCWDHPKM) folds into the WW domain. The segment at 3050–3400 (QGPWERAISP…TVLEGDNMET (351 aa)) is interaction with SYNM. Residues 3300–3356 (KHQAKCNICKECPIIGFRYRSLKHFNYDICQSCFFSGRVAKGHKMHYPMVEYCTPTT) form a ZZ-type; degenerate zinc finger. Zn(2+) contacts are provided by C3305, C3308, C3329, and C3332. Positions 3458–3510 (DDEHLLIQHYCQSLNQDSPLSQPRSPAQILISLESEERGELERILADLEEENR) are binds to SNTB1. S3475, S3482, and S3492 each carry phosphoserine. Disordered regions lie at residues 3520 to 3546 (KQQH…QSPR) and 3595 to 3677 (EAKV…EDTM). 2 stretches are compositionally biased toward polar residues: residues 3599–3618 (NGTT…SSQP) and 3654–3664 (QLNNSFPSSRG). 6 positions are modified to phosphoserine: S3604, S3605, S3609, S3615, S3616, and S3658.

Interacts with SYNM. Interacts with the syntrophins SNTG1 and SNTG2. Interacts with KRT19. Component of the dystrophin-associated glycoprotein complex which is composed of three subcomplexes: a cytoplasmic complex comprised of DMD (or UTRN), DTNA and a number of syntrophins, such as SNTB1, SNTB2, SNTG1 and SNTG2, the transmembrane dystroglycan complex, and the sarcoglycan-sarcospan complex. Interacts with DAG1 (betaDAG1) with DMD; the interaction is inhibited by phosphorylation on the PPXY motif of DAG1. Interacts with SYNM; SNTA1 and SNTB1. Interacts with CMYA5. Directly interacts with ANK2 and ANK3; these interactions do not interfere with betaDAG1-binding and are necessary for proper localization in muscle cells. Identified in a dystroglycan complex that contains at least PRX, DRP2, UTRN, DMD and DAG1. Interacts with DTNB. Interacts with PGM5; the interaction is direct. Interacts with NOS1; localizes NOS1 to sarcolemma in muscle cells. In terms of tissue distribution, strongly expressed in skeletal muscle and weak expression observed in newborn brain which increases in adult brain.

The protein localises to the cell membrane. Its subcellular location is the sarcolemma. It localises to the cytoplasm. It is found in the cytoskeleton. The protein resides in the postsynaptic cell membrane. Its function is as follows. Anchors the extracellular matrix to the cytoskeleton via F-actin. Ligand for dystroglycan. Component of the dystrophin-associated glycoprotein complex which accumulates at the neuromuscular junction (NMJ) and at a variety of synapses in the peripheral and central nervous systems and has a structural function in stabilizing the sarcolemma. Also implicated in signaling events and synaptic transmission. This chain is Dystrophin (Dmd), found in Rattus norvegicus (Rat).